The sequence spans 466 residues: Asparagine--tRNA ligase (466 aa).

The protein belongs to the class-II aminoacyl-tRNA synthetase family. In terms of assembly, homodimer.

Its subcellular location is the cytoplasm. It catalyses the reaction tRNA(Asn) + L-asparagine + ATP = L-asparaginyl-tRNA(Asn) + AMP + diphosphate + H(+). The chain is Asparagine--tRNA ligase from Vibrio cholerae serotype O1 (strain ATCC 39315 / El Tor Inaba N16961).